A 269-amino-acid chain; its full sequence is 4-hydroxy-tetrahydrodipicolinate reductase (269 aa).

NAD(+) contacts are provided by residues glycine 8–methionine 13 and glutamate 34. An NADP(+)-binding site is contributed by arginine 35. NAD(+)-binding positions include glycine 98–threonine 100 and alanine 122–tyrosine 125. Histidine 155 (proton donor/acceptor) is an active-site residue. Position 156 (histidine 156) interacts with (S)-2,3,4,5-tetrahydrodipicolinate. The Proton donor role is filled by lysine 159. Glycine 165–threonine 166 is a (S)-2,3,4,5-tetrahydrodipicolinate binding site.

This sequence belongs to the DapB family.

It is found in the cytoplasm. It catalyses the reaction (S)-2,3,4,5-tetrahydrodipicolinate + NAD(+) + H2O = (2S,4S)-4-hydroxy-2,3,4,5-tetrahydrodipicolinate + NADH + H(+). It carries out the reaction (S)-2,3,4,5-tetrahydrodipicolinate + NADP(+) + H2O = (2S,4S)-4-hydroxy-2,3,4,5-tetrahydrodipicolinate + NADPH + H(+). The protein operates within amino-acid biosynthesis; L-lysine biosynthesis via DAP pathway; (S)-tetrahydrodipicolinate from L-aspartate: step 4/4. Catalyzes the conversion of 4-hydroxy-tetrahydrodipicolinate (HTPA) to tetrahydrodipicolinate. The polypeptide is 4-hydroxy-tetrahydrodipicolinate reductase (Vibrio cholerae serotype O1 (strain ATCC 39315 / El Tor Inaba N16961)).